The sequence spans 186 residues: Ribosome-recycling factor (186 aa).

Belongs to the RRF family.

It is found in the cytoplasm. Its function is as follows. Responsible for the release of ribosomes from messenger RNA at the termination of protein biosynthesis. May increase the efficiency of translation by recycling ribosomes from one round of translation to another. This chain is Ribosome-recycling factor, found in Leifsonia xyli subsp. xyli (strain CTCB07).